Here is a 707-residue protein sequence, read N- to C-terminus: MQLGEQLLVSSVNLPGAHFYSLESARGGGGGGGGGGGGGGGSVSLLPGAAPSPQRLDLDKASKKFPGSLPCQAGSAEPAGAGAGAPAAMLSDADAGDTFGSTSAVAKPGPPDGRKGSPCAEEELPSAATAAATARYSMDSLSSERYYLPSPGPQGSELAAPCSLFQYPAAAGAAHGPVYPASNGARYPYGSMLPPGGFPAAVCPPARAQFGPAAGSGSGAGSSGGGAGGPGAYPYGQGSPLYGPYAGTSAAGSCGGLGGLGVPGSGFRAHVYLCNRPLWLKFHRHQTEMIITKQGRRMFPFLSFNINGLNPTAHYNVFVEVVLADPNHWRFQGGKWVTCGKADNNMQGNKMYVHPESPNTGSHWMRQEISFGKLKLTNNKGANNNNTQMIVLQSLHKYQPRLHIVEVTEDGVEDLNEPSKTQTFTFSETQFIAVTAYQNTDITQLKIDHNPFAKGFRDNYDSMYTASENDRLTPSPTDSPRSHQIVPGGRYGVQNFFPEPFVNTLPQARYYNGERTVPQTNGLLSPQQSEEVANPPQRWLVTPVQQPVTNKLDIGSYESEYTSSTLLPYGIKSLPLQTSHALGYYPDPTFPAMAGWGGRGAYQRKMAAGLPWTSRMSPPVFPEDQLAKEKVKEEISSSWIETPPSIKSLDSSDSGVYNSACKRKRLSPSTPSNGNSPPIKCEDINTEEYSKDTSKGMGAYYAFYTSP.

A compositionally biased stretch (gly residues) spans 27–42 (GGGGGGGGGGGGGGGS). Residues 27-125 (GGGGGGGGGG…GSPCAEEELP (99 aa)) are disordered. The span at 73-93 (AGSAEPAGAGAGAPAAMLSDA) shows a compositional bias: low complexity. The residue at position 117 (serine 117) is a Phosphoserine. The segment at residues 278 to 458 (LWLKFHRHQT…HNPFAKGFRD (181 aa)) is a DNA-binding region (T-box). Threonine 473 is subject to Phosphothreonine. The required for transcription activation stretch occupies residues 592-707 (AMAGWGGRGA…GAYYAFYTSP (116 aa)). A disordered region spans residues 642-689 (TPPSIKSLDSSDSGVYNSACKRKRLSPSTPSNGNSPPIKCEDINTEEY). Over residues 648-657 (SLDSSDSGVY) the composition is skewed to polar residues. Positions 667–678 (SPSTPSNGNSPP) are enriched in low complexity. The segment covering 680–689 (KCEDINTEEY) has biased composition (basic and acidic residues).

Expressed in CD8+ T-cells.

The protein localises to the nucleus. Functions as a transcriptional activator playing a crucial role during development. Functions in trophoblast differentiation and later in gastrulation, regulating both mesoderm delamination and endoderm specification. Plays a role in brain development being required for the specification and the proliferation of the intermediate progenitor cells and their progeny in the cerebral cortex. Required for differentiation and migration of unipolar dendritic brush cells. Also involved in the differentiation of CD8+ T-cells during immune response regulating the expression of lytic effector genes. This Mus musculus (Mouse) protein is Eomesodermin homolog (Eomes).